Reading from the N-terminus, the 72-residue chain is Large ribosomal subunit protein uL29 (72 aa).

It belongs to the universal ribosomal protein uL29 family.

The protein is Large ribosomal subunit protein uL29 of Prochlorococcus marinus (strain AS9601).